The sequence spans 685 residues: Stromal interaction molecule 1 (685 aa).

A signal peptide spans 1–22 (MDVCVRLALWLLWGLLLHQGQS). Topologically, residues 23 to 213 (LSHSHSEKAT…LLTRHNHLKD (191 aa)) are extracellular. 2 EF-hand domains span residues 64–97 (SFEA…EDLN) and 102–126 (TVKH…AWKS). Residues aspartate 76, aspartate 78, asparagine 80, aspartate 82, and glutamate 87 each contribute to the Ca(2+) site. N-linked (GlcNAc...) asparagine glycans are attached at residues asparagine 131 and asparagine 171. Positions 132 to 200 (WTVDEVVQWL…QLKALDTVLF (69 aa)) constitute an SAM domain. Residues 214–234 (FMLVVSIVIGVGGCWFAYIQN) form a helical membrane-spanning segment. At 235-685 (RYSKEHMKKM…LKIFKKPLKK (451 aa)) the chain is on the cytoplasmic side. The stretch at 248–442 (LEGLHRAEQS…IEILCGFQIV (195 aa)) forms a coiled coil. Serine 257 is modified (phosphoserine). The interval 344-442 (PEALQKWLQL…IEILCGFQIV (99 aa)) is SOAR/CAD. The tract at residues 475–483 (DDVDDMDEE) is contributes to fast Ca(2+)-dependent inactivation of CRAC channels. Low complexity predominate over residues 490-499 (MQSPSLQSSV). A disordered region spans residues 490–542 (MQSPSLQSSVRQRLTEPQHGLGSQRDLTHSDSESSLHMSDRQRVAPKPPQMSR). Threonine 504 is modified (phosphothreonine). Residue serine 512 is modified to Phosphoserine. Over residues 515-532 (DLTHSDSESSLHMSDRQR) the composition is skewed to basic and acidic residues. Threonine 517 carries the post-translational modification Phosphothreonine. Serine 519, serine 521, serine 523, serine 524, serine 567, serine 575, serine 602, serine 608, serine 618, serine 621, and serine 628 each carry phosphoserine. Positions 596 to 685 (LMELSPSAPP…LKIFKKPLKK (90 aa)) are disordered. A compositionally biased stretch (low complexity) spans 608–620 (SPHLDSSRSHSPS). Residues 642–645 (TRIP) carry the Microtubule tip localization signal motif. A compositionally biased stretch (acidic residues) spans 655–666 (EEDNGSIGEETD). Serine 660 is modified (phosphoserine). Position 665 is a phosphothreonine (threonine 665). Serine 668 bears the Phosphoserine mark. Positions 670–685 (GRKKFPLKIFKKPLKK) are enriched in basic residues. Residues 672-685 (KKFPLKIFKKPLKK) form a required for generation of inwardly rectifying CRAC currents region.

As to quaternary structure, monomer in the presence of Ca(2+); it oligomerizes in absence of Ca(2+). Forms homooligomers and heterooligomers with STIM2. Interacts with pore-forming subunits of CRAC channels, ORAI1, ORAI2 and ORAI3; this interaction is potentiated upon Ca(2+) store depletion. Interacts (via the transmembrane region and the SOAR/CAD domain) with SPPL3; the interaction promotes the binding of STIM1 to ORAI1. Interacts (via the SOAR/CAD domain) with ORAI1. Interacts with MAPRE1; probably required for targeting to the growing microtubule plus ends. Interacts with CRACR2A/EFCAB4B; the interaction is direct and takes place in absence of Ca(2+). Forms a complex with CRACR2A/EFCAB4B and ORAI1 at low concentration of Ca(2+), the complex dissociates at elevated Ca(2+) concentrations. Interacts with SARAF, promoting a slow inactivation of STIM1-dependent SOCE activity, possibly by facilitating the deoligomerization of STIM1. Interacts with EFHB; the interaction takes place upon Ca(2+)-store depletion and inhibits the association with SARAF. Interacts with ASPH (isoform 8). Interacts with SLC35G1; intracellular Ca(2+)-dependent. May interact with ATP1A1, ATP2A2, ATP2B1, ATP2B4, KPNB1 and XPO1; through SLC35G1. Interacts with TMEM203. Interacts with STIMATE, promoting STIM1 conformational switch. Interacts with TMEM178A. Interacts with CASQ1 (via C-terminal end and preferentially with the monomeric form); this interaction increases in response to a depletion of intracellular Ca(2+), decreases both STIM1 aggregation and clustering, interaction of STIM1 with ORAI1 and store-operated Ca(2+) entry (SOCE) activity. Interacts with ADCY8. In terms of processing, glycosylation is required for cell surface expression. Post-translationally, phosphorylated predominantly on Ser residues. In terms of tissue distribution, ubiquitously expressed in various human primary cells and tumor cell lines.

The protein localises to the cell membrane. The protein resides in the endoplasmic reticulum membrane. Its subcellular location is the cytoplasm. It is found in the cytoskeleton. It localises to the sarcoplasmic reticulum. Functionally, acts as a Ca(2+) sensor that gates two major inward rectifying Ca(2+) channels at the plasma membrane: Ca(2+) release-activated Ca(2+) (CRAC) channels and arachidonate-regulated Ca(2+)-selective (ARC) channels. Plays a role in mediating store-operated Ca(2+) entry (SOCE), a Ca(2+) influx following depletion of intracellular Ca(2+) stores. Upon Ca(2+) depletion, translocates from the endoplasmic reticulum to the plasma membrane where it activates CRAC channel pore-forming subunits ORA1, ORA2 and ORAI3 to generate sustained and oscillatory Ca(2+) entry. Involved in enamel formation. This is Stromal interaction molecule 1 (STIM1) from Homo sapiens (Human).